Reading from the N-terminus, the 200-residue chain is Snake venom metalloproteinase rhomb-I (200 aa).

The 197-residue stretch at 4–200 (KYIELVVVAD…RKPQCILNKP (197 aa)) folds into the Peptidase M12B domain. Residues Glu7 and Asp91 each coordinate Ca(2+). 3 disulfides stabilise this stretch: Cys115-Cys195, Cys155-Cys179, and Cys157-Cys162. Residue His140 participates in Zn(2+) binding. Residue Glu141 is part of the active site. Zn(2+) contacts are provided by His144 and His150. Cys195 and Asn198 together coordinate Ca(2+).

In terms of assembly, monomer. It depends on Zn(2+) as a cofactor. Expressed by the venom gland.

It is found in the secreted. Its function is as follows. Snake venom zinc metalloproteinase that induces hemorrhage. In Lachesis muta rhombeata (Bushmaster), this protein is Snake venom metalloproteinase rhomb-I.